Here is a 315-residue protein sequence, read N- to C-terminus: DNA-directed RNA polymerase subunit alpha (315 aa).

Residues methionine 1 to threonine 228 form an alpha N-terminal domain (alpha-NTD) region. The alpha C-terminal domain (alpha-CTD) stretch occupies residues lysine 245 to glutamate 315.

It belongs to the RNA polymerase alpha chain family. As to quaternary structure, homodimer. The RNAP catalytic core consists of 2 alpha, 1 beta, 1 beta' and 1 omega subunit. When a sigma factor is associated with the core the holoenzyme is formed, which can initiate transcription.

The catalysed reaction is RNA(n) + a ribonucleoside 5'-triphosphate = RNA(n+1) + diphosphate. In terms of biological role, DNA-dependent RNA polymerase catalyzes the transcription of DNA into RNA using the four ribonucleoside triphosphates as substrates. The chain is DNA-directed RNA polymerase subunit alpha from Clostridioides difficile (strain 630) (Peptoclostridium difficile).